The primary structure comprises 113 residues: Large ribosomal subunit protein uL22 (113 aa).

The protein belongs to the universal ribosomal protein uL22 family. In terms of assembly, part of the 50S ribosomal subunit.

In terms of biological role, this protein binds specifically to 23S rRNA; its binding is stimulated by other ribosomal proteins, e.g. L4, L17, and L20. It is important during the early stages of 50S assembly. It makes multiple contacts with different domains of the 23S rRNA in the assembled 50S subunit and ribosome. The globular domain of the protein is located near the polypeptide exit tunnel on the outside of the subunit, while an extended beta-hairpin is found that lines the wall of the exit tunnel in the center of the 70S ribosome. The protein is Large ribosomal subunit protein uL22 of Geobacillus stearothermophilus (Bacillus stearothermophilus).